We begin with the raw amino-acid sequence, 373 residues long: Ca(2+)/H(+) antiporter (373 aa).

11 consecutive transmembrane segments (helical) span residues 6–26 (TIFF…WLHW), 29–49 (VSIF…MGEA), 61–81 (LGGL…AFIA), 94–114 (ITGS…LLGG), 134–154 (MNLA…SNGI), 162–182 (LSVA…LFSM), 220–240 (FWLG…ELLV), 249–269 (SLGL…GNAA), 291–311 (VGST…AGWI), 318–338 (LDFN…ANSI), and 349–369 (GSLL…HPVV).

The protein belongs to the Ca(2+):cation antiporter (CaCA) (TC 2.A.19) family. Cation/proton exchanger (CAX) subfamily.

It localises to the cell inner membrane. Its function is as follows. Ca(+)/H(+) antiporter that extrudes calcium in exchange for external protons. Plays an important role in salt tolerance. Does not transport sodium or lithium. The protein is Ca(2+)/H(+) antiporter of Aphanothece halophytica.